The primary structure comprises 345 residues: Acetylserotonin O-methyltransferase (345 aa).

Residues Tyr-147, Trp-164, Asp-210, 235 to 237 (GDF), and Arg-252 contribute to the S-adenosyl-L-methionine site. His-255 functions as the Proton donor/acceptor in the catalytic mechanism. Substrate is bound by residues Asp-256, Asn-302, and Gln-306.

This sequence belongs to the class I-like SAM-binding methyltransferase superfamily. Cation-independent O-methyltransferase family. As to quaternary structure, homodimer. Highly expressed in pineal gland. In the retina, 10- to 100-fold lower expression compared to pineal gland, if any.

It carries out the reaction N-acetylserotonin + S-adenosyl-L-methionine = melatonin + S-adenosyl-L-homocysteine + H(+). It functions in the pathway aromatic compound metabolism; melatonin biosynthesis; melatonin from serotonin: step 1/2. In terms of biological role, catalyzes the transfer of a methyl group onto N-acetylserotonin, producing melatonin (N-acetyl-5-methoxytryptamine). The sequence is that of Acetylserotonin O-methyltransferase (ASMT) from Macaca mulatta (Rhesus macaque).